The primary structure comprises 403 residues: Multifunctional CCA protein (403 aa).

ATP contacts are provided by Gly8 and Arg11. Gly8 and Arg11 together coordinate CTP. Residues Asp21 and Asp23 each contribute to the Mg(2+) site. The ATP site is built by Arg91, Arg137, and Arg140. The CTP site is built by Arg91, Arg137, and Arg140. One can recognise an HD domain in the interval 228 to 329 (TGIHTLMVAK…LKVLGLLDVW (102 aa)).

It belongs to the tRNA nucleotidyltransferase/poly(A) polymerase family. Bacterial CCA-adding enzyme type 1 subfamily. As to quaternary structure, monomer. Can also form homodimers and oligomers. It depends on Mg(2+) as a cofactor. Ni(2+) is required as a cofactor.

It carries out the reaction a tRNA precursor + 2 CTP + ATP = a tRNA with a 3' CCA end + 3 diphosphate. It catalyses the reaction a tRNA with a 3' CCA end + 2 CTP + ATP = a tRNA with a 3' CCACCA end + 3 diphosphate. Functionally, catalyzes the addition and repair of the essential 3'-terminal CCA sequence in tRNAs without using a nucleic acid template. Adds these three nucleotides in the order of C, C, and A to the tRNA nucleotide-73, using CTP and ATP as substrates and producing inorganic pyrophosphate. tRNA 3'-terminal CCA addition is required both for tRNA processing and repair. Also involved in tRNA surveillance by mediating tandem CCA addition to generate a CCACCA at the 3' terminus of unstable tRNAs. While stable tRNAs receive only 3'-terminal CCA, unstable tRNAs are marked with CCACCA and rapidly degraded. This chain is Multifunctional CCA protein, found in Vibrio cholerae serotype O1 (strain ATCC 39315 / El Tor Inaba N16961).